Here is a 91-residue protein sequence, read N- to C-terminus: Small ribosomal subunit protein uS19 (91 aa).

Belongs to the universal ribosomal protein uS19 family.

Protein S19 forms a complex with S13 that binds strongly to the 16S ribosomal RNA. The chain is Small ribosomal subunit protein uS19 from Bordetella bronchiseptica (strain ATCC BAA-588 / NCTC 13252 / RB50) (Alcaligenes bronchisepticus).